Reading from the N-terminus, the 352-residue chain is Isoflavone-7-O-methyltransferase 8 (352 aa).

A substrate-binding site is contributed by 118-127 (VLDPTLSGSY). S-adenosyl-L-methionine-binding residues include glycine 196, aspartate 219, aspartate 239, methionine 240, and lysine 253. Catalysis depends on histidine 257, which acts as the Proton acceptor.

It belongs to the class I-like SAM-binding methyltransferase superfamily. Cation-independent O-methyltransferase family. COMT subfamily. In terms of assembly, homodimer.

The catalysed reaction is a 7-hydroxyisoflavone + S-adenosyl-L-methionine = a 7-methoxyisoflavone + S-adenosyl-L-homocysteine + H(+). It participates in phytoalexin biosynthesis; medicarpin biosynthesis. Transfers a methyl group to 7-hydroxyls of the isoflavones daidzein, genistein and 6,7,4'-trihydroxyisoflavone. Can also methylate (+)6a-hydroxymaackiain with lower efficiency. This is Isoflavone-7-O-methyltransferase 8 from Medicago sativa (Alfalfa).